The chain runs to 259 residues: Ribosomal RNA small subunit methyltransferase J (259 aa).

S-adenosyl-L-methionine contacts are provided by residues 107–108, 123–124, 159–160, and Asp177; these read RD, ER, and SS.

The protein belongs to the methyltransferase superfamily. RsmJ family.

The protein resides in the cytoplasm. The enzyme catalyses guanosine(1516) in 16S rRNA + S-adenosyl-L-methionine = N(2)-methylguanosine(1516) in 16S rRNA + S-adenosyl-L-homocysteine + H(+). Specifically methylates the guanosine in position 1516 of 16S rRNA. This chain is Ribosomal RNA small subunit methyltransferase J, found in Shewanella loihica (strain ATCC BAA-1088 / PV-4).